Reading from the N-terminus, the 363-residue chain is Phospho-N-acetylmuramoyl-pentapeptide-transferase (363 aa).

The next 10 membrane-spanning stretches (helical) occupy residues 3 to 23 (QILF…PLLI), 48 to 68 (GTPT…YFLA), 83 to 103 (PTFS…VGFL), 121 to 141 (AKMI…LQFA), 159 to 179 (FGWT…ILAM), 192 to 212 (LATG…VWQF), 234 to 254 (PLDL…FLWW), 261 to 281 (IFMG…LAIC), 286 to 306 (LLMA…VIQV), and 340 to 360 (FWII…AGWA).

The protein belongs to the glycosyltransferase 4 family. MraY subfamily. Mg(2+) is required as a cofactor.

The protein localises to the cell membrane. The catalysed reaction is UDP-N-acetyl-alpha-D-muramoyl-L-alanyl-gamma-D-glutamyl-meso-2,6-diaminopimeloyl-D-alanyl-D-alanine + di-trans,octa-cis-undecaprenyl phosphate = di-trans,octa-cis-undecaprenyl diphospho-N-acetyl-alpha-D-muramoyl-L-alanyl-D-glutamyl-meso-2,6-diaminopimeloyl-D-alanyl-D-alanine + UMP. Its pathway is cell wall biogenesis; peptidoglycan biosynthesis. Functionally, catalyzes the initial step of the lipid cycle reactions in the biosynthesis of the cell wall peptidoglycan: transfers peptidoglycan precursor phospho-MurNAc-pentapeptide from UDP-MurNAc-pentapeptide onto the lipid carrier undecaprenyl phosphate, yielding undecaprenyl-pyrophosphoryl-MurNAc-pentapeptide, known as lipid I. The protein is Phospho-N-acetylmuramoyl-pentapeptide-transferase of Streptomyces coelicolor (strain ATCC BAA-471 / A3(2) / M145).